We begin with the raw amino-acid sequence, 334 residues long: MNTEATHDQNEAQTTGVRLRNAREQLGLSQQAVAERLCLKVSTVRDIEEDKAPSDLASTFLRGYIRSYARLVHVPEEELLPGLEKQAPLRAAKVAPMQSFSLGKRRKKRDGWLMSFTWLVLFVVVGLTGAWWWQNHKAQQEEITTMADQSTAELNADKDSGQSVPLDTGAVTSQDTTPAQTAPAPATPVDSTAATQTPAPTAAATQNTVVAPSQANVDTAATSAAPAATETPSALPTSQAGVAAPAADPNALVMNFTADCWLEVTDATGKKLFSGMQRKDGNLNLTGQAPYKLKIGAPAAVQIQYQGKPVDLSRFIRTNQVARLTLNAEPTPAQ.

Topologically, residues M1 to G111 are cytoplasmic. One can recognise an HTH cro/C1-type domain in the interval L19 to L71. Residues Q30 to E49 constitute a DNA-binding region (H-T-H motif). A helical; Signal-anchor for type II membrane protein transmembrane segment spans residues W112 to W132. At W133 to Q334 the chain is on the periplasmic side. The tract at residues N155–G241 is disordered. Polar residues predominate over residues G161–D175. Composition is skewed to low complexity over residues T176–A211 and T219–G241.

This sequence belongs to the RodZ family.

The protein resides in the cell inner membrane. In terms of biological role, cytoskeletal protein that is involved in cell-shape control through regulation of the length of the long axis. This Salmonella dublin (strain CT_02021853) protein is Cytoskeleton protein RodZ.